The following is a 372-amino-acid chain: Hydrogenase-1 small chain (372 aa).

The tat-type signal signal peptide spans methionine 1–alanine 45. The Periplasmic segment spans residues leucine 46–aspartate 325. Positions 62, 65, 160, 194, 232, 235, 260, and 266 each coordinate [4Fe-4S] cluster. Cysteine 275, cysteine 294, and cysteine 297 together coordinate [3Fe-4S] cluster. The helical transmembrane segment at threonine 326–serine 346 threads the bilayer. Positions serine 346–alanine 372 are disordered. Residues serine 347–alanine 372 are Cytoplasmic-facing. The segment covering glutamate 360 to alanine 372 has biased composition (basic and acidic residues).

The protein belongs to the [NiFe]/[NiFeSe] hydrogenase small subunit family. Heterodimer of a large and a small subunit. Requires [4Fe-4S] cluster as cofactor. [3Fe-4S] cluster serves as cofactor. Post-translationally, predicted to be exported by the Tat system. The position of the signal peptide cleavage has not been experimentally proven.

It is found in the cell inner membrane. The enzyme catalyses H2 + A = AH2. This is one of three S.flexneri hydrogenases synthesized in response to different physiological conditions. HYD1 is believed to have a role in hydrogen cycling during fermentative growth. This Shigella flexneri protein is Hydrogenase-1 small chain (hyaA).